Here is a 633-residue protein sequence, read N- to C-terminus: Kelch repeat and BTB domain-containing protein 11 (633 aa).

Residues 1–118 form a disordered region; the sequence is MENSVAPFVL…EDPPSRHEHA (118 aa). Over residues 35-60 the composition is skewed to polar residues; sequence STAQTPCSLSASLCFSSGDDSPPQSR. A compositionally biased stretch (low complexity) spans 61–73; it reads ASAAEGSEASPPS. Phosphoserine occurs at positions 70, 73, 92, 95, 107, and 113. The BTB domain maps to 146–206; that stretch reads PDLVIEVAGR…AYSGRMAGVR (61 aa). Kelch repeat units follow at residues 317 to 365, 366 to 418, 419 to 463, and 465 to 506; these read RPQS…VLFN, YLFL…ALDG, HLYA…TCNG, and IYVS…ALDG.

This Mus musculus (Mouse) protein is Kelch repeat and BTB domain-containing protein 11 (Kbtbd11).